The sequence spans 315 residues: Malate dehydrogenase (315 aa).

NAD(+)-binding positions include 10-15 and Asp-34; that span reads GAGNVG. 2 residues coordinate substrate: Arg-85 and Arg-91. NAD(+)-binding positions include Asn-98 and 121 to 123; that span reads VSN. Asn-123 and Arg-154 together coordinate substrate. The active-site Proton acceptor is the His-178.

This sequence belongs to the LDH/MDH superfamily. MDH type 3 family.

The catalysed reaction is (S)-malate + NAD(+) = oxaloacetate + NADH + H(+). Its function is as follows. Catalyzes the reversible oxidation of malate to oxaloacetate. This is Malate dehydrogenase from Rhodopirellula baltica (strain DSM 10527 / NCIMB 13988 / SH1).